We begin with the raw amino-acid sequence, 424 residues long: Kynureninase (424 aa).

Residues Leu105, Ser106, 133–136, Asp218, His221, and Tyr243 each bind pyridoxal 5'-phosphate; that span reads FPTD. Lys244 carries the N6-(pyridoxal phosphate)lysine modification. Residues Trp274 and Asn302 each coordinate pyridoxal 5'-phosphate.

The protein belongs to the kynureninase family. Homodimer. Requires pyridoxal 5'-phosphate as cofactor.

The catalysed reaction is L-kynurenine + H2O = anthranilate + L-alanine + H(+). It catalyses the reaction 3-hydroxy-L-kynurenine + H2O = 3-hydroxyanthranilate + L-alanine + H(+). It participates in amino-acid degradation; L-kynurenine degradation; L-alanine and anthranilate from L-kynurenine: step 1/1. Its pathway is cofactor biosynthesis; NAD(+) biosynthesis; quinolinate from L-kynurenine: step 2/3. Catalyzes the cleavage of L-kynurenine (L-Kyn) and L-3-hydroxykynurenine (L-3OHKyn) into anthranilic acid (AA) and 3-hydroxyanthranilic acid (3-OHAA), respectively. The chain is Kynureninase from Stenotrophomonas maltophilia (strain K279a).